Reading from the N-terminus, the 100-residue chain is Small ribosomal subunit protein uS14c (100 aa).

The protein belongs to the universal ribosomal protein uS14 family. Part of the 30S ribosomal subunit.

The protein localises to the plastid. The protein resides in the chloroplast. Functionally, binds 16S rRNA, required for the assembly of 30S particles. This is Small ribosomal subunit protein uS14c from Platanus occidentalis (Sycamore).